A 295-amino-acid chain; its full sequence is Ankyrin repeat and SOCS box protein 17 (295 aa).

The ANK repeat unit spans residues Ser-146–Asn-176. The SOCS box domain maps to Leu-232–Ser-295.

It belongs to the ankyrin SOCS box (ASB) family.

It functions in the pathway protein modification; protein ubiquitination. Its function is as follows. May be a substrate-recognition component of a SCF-like ECS (Elongin-Cullin-SOCS-box protein) E3 ubiquitin-protein ligase complex which mediates the ubiquitination and subsequent proteasomal degradation of target proteins. The polypeptide is Ankyrin repeat and SOCS box protein 17 (ASB17) (Bos taurus (Bovine)).